A 214-amino-acid chain; its full sequence is UPF0056 membrane protein aq_540 (214 aa).

A run of 6 helical transmembrane segments spans residues 17-37 (FLSL…ISLM), 47-67 (VIAL…LISG), 73-93 (FMGI…FLIA), 122-142 (LIPL…VLVL), 153-173 (VALF…YSLS), and 185-205 (INLI…QFVV).

Belongs to the UPF0056 (MarC) family.

The protein localises to the cell membrane. The protein is UPF0056 membrane protein aq_540 of Aquifex aeolicus (strain VF5).